Reading from the N-terminus, the 126-residue chain is Small ribosomal subunit protein uS12 (126 aa).

Positions 1 to 28 (MPTINQLVRKGRQSETTKSKSPALQDCP) are disordered. Asp-89 is subject to 3-methylthioaspartic acid. The disordered stretch occupies residues 103-126 (DTQGVKDRKQARSKYGAKRAKAGK). Residues 113–126 (ARSKYGAKRAKAGK) show a composition bias toward basic residues.

This sequence belongs to the universal ribosomal protein uS12 family. In terms of assembly, part of the 30S ribosomal subunit. Contacts proteins S8 and S17. May interact with IF1 in the 30S initiation complex.

With S4 and S5 plays an important role in translational accuracy. Functionally, interacts with and stabilizes bases of the 16S rRNA that are involved in tRNA selection in the A site and with the mRNA backbone. Located at the interface of the 30S and 50S subunits, it traverses the body of the 30S subunit contacting proteins on the other side and probably holding the rRNA structure together. The combined cluster of proteins S8, S12 and S17 appears to hold together the shoulder and platform of the 30S subunit. The chain is Small ribosomal subunit protein uS12 from Paraburkholderia phytofirmans (strain DSM 17436 / LMG 22146 / PsJN) (Burkholderia phytofirmans).